We begin with the raw amino-acid sequence, 332 residues long: L-lactate dehydrogenase A chain (332 aa).

Ala-2 is subject to N-acetylalanine. Lys-5 is subject to N6-acetyllysine; alternate. N6-succinyllysine; alternate is present on Lys-5. Lys-14 is subject to N6-acetyllysine. Thr-18 is modified (phosphothreonine). Position 29 to 57 (29 to 57 (GAVGMACAISILMKDLADELALVDVIEDK)) interacts with NAD(+). The residue at position 57 (Lys-57) is an N6-acetyllysine; alternate. Lys-57 participates in a covalent cross-link: Glycyl lysine isopeptide (Lys-Gly) (interchain with G-Cter in SUMO2); alternate. Position 81 is an N6-acetyllysine (Lys-81). Arg-99 serves as a coordination point for NAD(+). Arg-106 is a substrate binding site. At Lys-118 the chain carries N6-acetyllysine; alternate. Lys-118 carries the post-translational modification N6-succinyllysine; alternate. Lys-126 bears the N6-acetyllysine mark. 2 residues coordinate substrate: Asn-138 and Arg-169. The active-site Proton acceptor is the His-193. N6-acetyllysine occurs at positions 224 and 232. Tyr-239 bears the Phosphotyrosine mark. Lys-243 carries the post-translational modification N6-acetyllysine. Thr-248 serves as a coordination point for substrate. The residue at position 309 (Thr-309) is a Phosphothreonine. At Ser-310 the chain carries Phosphoserine. Lys-318 is modified (N6-acetyllysine; alternate). Position 318 is an N6-succinyllysine; alternate (Lys-318). Residue Thr-322 is modified to Phosphothreonine.

Belongs to the LDH/MDH superfamily. LDH family. Homotetramer. Interacts with PTEN upstream reading frame protein MP31. In terms of processing, ISGylated.

Its subcellular location is the cytoplasm. It carries out the reaction (S)-lactate + NAD(+) = pyruvate + NADH + H(+). It functions in the pathway fermentation; pyruvate fermentation to lactate; (S)-lactate from pyruvate: step 1/1. Its function is as follows. Interconverts simultaneously and stereospecifically pyruvate and lactate with concomitant interconversion of NADH and NAD(+). This chain is L-lactate dehydrogenase A chain (LDHA), found in Pan troglodytes (Chimpanzee).